Consider the following 360-residue polypeptide: Peptide chain release factor 1 (360 aa).

N5-methylglutamine is present on glutamine 235. Residues 284-313 (AKRQQAEASTRRNLLGSGDRSDRNRTYNFP) form a disordered region.

Belongs to the prokaryotic/mitochondrial release factor family. Methylated by PrmC. Methylation increases the termination efficiency of RF1.

Its subcellular location is the cytoplasm. Functionally, peptide chain release factor 1 directs the termination of translation in response to the peptide chain termination codons UAG and UAA. This chain is Peptide chain release factor 1, found in Salmonella gallinarum (strain 287/91 / NCTC 13346).